A 343-amino-acid polypeptide reads, in one-letter code: Shematrin-like protein 3 (343 aa).

Positions 1–16 (MLKLVCAVVLIATVNA) are cleaved as a signal peptide.

In terms of tissue distribution, prismatic layer of shell (at protein level).

The protein resides in the secreted. The sequence is that of Shematrin-like protein 3 from Pinctada maxima (Silver-lipped pearl oyster).